Consider the following 397-residue polypeptide: Inositol 3-kinase (397 aa).

Residues Ser-228, 278–281 (GAGD), and Asn-305 each bind ATP. The Proton acceptor role is filled by Asp-281.

This sequence belongs to the carbohydrate kinase pfkB family. Expressed in roots, leaf blade shoots, leaf sheath shoots and panicles.

The enzyme catalyses myo-inositol + ATP = 1D-myo-inositol 3-phosphate + ADP + H(+). Its function is as follows. Kinase that phosphorylates myo-inositol to produce multiple myo-inositol monophosphates. Participates in phytic acid biosynthesis in developing seeds. Phytic acid is the primary storage form of phosphorus in cereal grains and other plant seeds. This is Inositol 3-kinase from Oryza sativa subsp. japonica (Rice).